Consider the following 120-residue polypeptide: Ribosome-binding factor A (120 aa).

The protein belongs to the RbfA family. In terms of assembly, monomer. Binds 30S ribosomal subunits, but not 50S ribosomal subunits or 70S ribosomes.

The protein localises to the cytoplasm. Its function is as follows. One of several proteins that assist in the late maturation steps of the functional core of the 30S ribosomal subunit. Associates with free 30S ribosomal subunits (but not with 30S subunits that are part of 70S ribosomes or polysomes). Required for efficient processing of 16S rRNA. May interact with the 5'-terminal helix region of 16S rRNA. The chain is Ribosome-binding factor A from Fusobacterium nucleatum subsp. nucleatum (strain ATCC 25586 / DSM 15643 / BCRC 10681 / CIP 101130 / JCM 8532 / KCTC 2640 / LMG 13131 / VPI 4355).